Consider the following 202-residue polypeptide: dITP/XTP pyrophosphatase (202 aa).

8-13 (TKNMGK) contacts substrate. E41 and D70 together coordinate Mg(2+). D70 functions as the Proton acceptor in the catalytic mechanism. Substrate contacts are provided by residues S71, 155–158 (FGYD), K178, and 183–184 (HR).

It belongs to the HAM1 NTPase family. Homodimer. Requires Mg(2+) as cofactor.

It carries out the reaction XTP + H2O = XMP + diphosphate + H(+). The catalysed reaction is dITP + H2O = dIMP + diphosphate + H(+). It catalyses the reaction ITP + H2O = IMP + diphosphate + H(+). Its function is as follows. Pyrophosphatase that catalyzes the hydrolysis of nucleoside triphosphates to their monophosphate derivatives, with a high preference for the non-canonical purine nucleotides XTP (xanthosine triphosphate), dITP (deoxyinosine triphosphate) and ITP. Seems to function as a house-cleaning enzyme that removes non-canonical purine nucleotides from the nucleotide pool, thus preventing their incorporation into DNA/RNA and avoiding chromosomal lesions. The chain is dITP/XTP pyrophosphatase from Bacillus anthracis.